We begin with the raw amino-acid sequence, 318 residues long: Methionyl-tRNA formyltransferase (318 aa).

112–115 (SILP) is a (6S)-5,6,7,8-tetrahydrofolate binding site.

This sequence belongs to the Fmt family.

It carries out the reaction L-methionyl-tRNA(fMet) + (6R)-10-formyltetrahydrofolate = N-formyl-L-methionyl-tRNA(fMet) + (6S)-5,6,7,8-tetrahydrofolate + H(+). Functionally, attaches a formyl group to the free amino group of methionyl-tRNA(fMet). The formyl group appears to play a dual role in the initiator identity of N-formylmethionyl-tRNA by promoting its recognition by IF2 and preventing the misappropriation of this tRNA by the elongation apparatus. This Haemophilus influenzae (strain ATCC 51907 / DSM 11121 / KW20 / Rd) protein is Methionyl-tRNA formyltransferase.